A 217-amino-acid chain; its full sequence is Putative cobalt transport protein CbiM (217 aa).

6 helical membrane-spanning segments follow: residues 8–28 (LPPE…VYGA), 44–64 (LIAV…PSVT), 74–94 (GIAV…IVLL), 107–127 (TLGA…WIAF), 139–161 (VFAA…LALA), and 181–201 (IFAV…VMLV).

This sequence belongs to the CbiM family. As to quaternary structure, forms an energy-coupling factor (ECF) transporter complex composed of an ATP-binding protein (A component, CbiO), a transmembrane protein (T component, CbiQ) and 2 possible substrate-capture proteins (S components, CbiM and CbiN) of unknown stoichimetry.

It localises to the cell membrane. It functions in the pathway cofactor biosynthesis; adenosylcobalamin biosynthesis. Part of the energy-coupling factor (ECF) transporter complex CbiMNOQ involved in cobalt import. The protein is Putative cobalt transport protein CbiM of Archaeoglobus fulgidus (strain ATCC 49558 / DSM 4304 / JCM 9628 / NBRC 100126 / VC-16).